Consider the following 66-residue polypeptide: Cadmium-metallothionein (66 aa).

At Ser-1 the chain carries N-acetylserine. Residues Cys-9, Cys-13, Cys-18, Cys-20, Cys-24, Cys-26, Cys-30, Cys-32, Cys-35, Cys-38, Cys-40, Cys-45, Cys-47, Cys-51, Cys-57, Cys-59, Cys-63, and Cys-65 each contribute to the Cd(2+) site.

The protein belongs to the metallothionein superfamily. Type 2 family.

Functionally, the metallothioneins are involved in the cellular sequestration of toxic metal ions and regulation of essential trace elements. Binds almost exclusively cadmium. The polypeptide is Cadmium-metallothionein (Helix pomatia (Roman snail)).